Here is a 290-residue protein sequence, read N- to C-terminus: Pyridoxal kinase PdxY (290 aa).

S14 contacts substrate. 2 residues coordinate ATP: D116 and E153. D226 provides a ligand contact to substrate.

Belongs to the pyridoxine kinase family. PdxY subfamily. Homodimer. Mg(2+) serves as cofactor.

The catalysed reaction is pyridoxal + ATP = pyridoxal 5'-phosphate + ADP + H(+). It participates in cofactor metabolism; pyridoxal 5'-phosphate salvage; pyridoxal 5'-phosphate from pyridoxal: step 1/1. In terms of biological role, pyridoxal kinase involved in the salvage pathway of pyridoxal 5'-phosphate (PLP). Catalyzes the phosphorylation of pyridoxal to PLP. The chain is Pyridoxal kinase PdxY from Rubrobacter xylanophilus (strain DSM 9941 / JCM 11954 / NBRC 16129 / PRD-1).